Here is a 520-residue protein sequence, read N- to C-terminus: Sodium-dependent dicarboxylate transporter SdcS (520 aa).

14 helical membrane-spanning segments follow: residues 30 to 50 (AGQL…LLFF), 55 to 75 (LPWK…WWIT), 77 to 97 (AIPI…GHIL), 104 to 124 (SEYG…AIAM), 160 to 180 (SMFV…LAII), 207 to 227 (IGYA…PLII), 242 to 262 (FAKW…ITWL), 298 to 318 (KVVQ…EFLL), 323 to 343 (VTSS…LFII), 362 to 382 (ELPW…KGIS), 399 to 419 (GVSP…LTEV), 428 to 448 (MILP…LLLM), 452 to 472 (AMAA…AIIF), and 491 to 511 (LISA…VLGI).

Belongs to the SLC13A/DASS transporter (TC 2.A.47) family. NADC subfamily.

The protein resides in the cell membrane. Functionally, mediates the transport of the dicarboxylates fumarate, malate, and succinate across the cytoplasmic membrane via a Na(+)-electrochemical gradient. The polypeptide is Sodium-dependent dicarboxylate transporter SdcS (sdcS) (Staphylococcus aureus (strain NCTC 8325 / PS 47)).